Consider the following 5148-residue polypeptide: E3 ubiquitin-protein ligase RNF213 (5148 aa).

The span at 38–48 (DNTLVVSSTPE) shows a compositional bias: polar residues. The interval 38-341 (DNTLVVSSTP…QAAAPEPTSA (304 aa)) is disordered. Over residues 69-78 (PGKELEKPEE) the composition is skewed to basic and acidic residues. Residues 101-113 (GTISSSEAPSSGL) show a composition bias toward polar residues. Over residues 130-146 (PQNQAQQGGAASQPGHP) the composition is skewed to low complexity. At Ser196 the chain carries Phosphoserine. Composition is skewed to basic and acidic residues over residues 233–245 (SKGE…KKVP), 257–267 (AGKETGEDVRK), and 279–289 (KHGDQEAELKG). The span at 319 to 335 (AAAVKTQQAAAPQQAAA) shows a compositional bias: low complexity. Residue Lys1128 forms a Glycyl lysine isopeptide (Lys-Gly) (interchain with G-Cter in SUMO2) linkage. ATP-binding positions include 1957–1962 (GVGKSL), Glu2060, Ala2114, Asp2116, and Arg2177. Phosphoserine is present on Ser2234. The ATP site is built by Lys2460 and Ser2535. Residues 3435-3465 (EEMEIETSQSKELAEEQMEVEDSEEMKKASD) adopt a coiled-coil conformation. The Zn(2+) site is built by Cys3947, Cys3950, Cys3962, His3964, Cys3967, Cys3970, Cys3982, Cys3985, Cys4451, and His4455. An RING-type zinc finger spans residues 3947-3986 (CFICHGDAQDPVCLPCDHVYCLRCIQTWLIPGQMMCPYCL). Residues 4429 to 4501 (MPEDLLVHAR…IRNNEDRTQT (73 aa)) form an RZ-type zinc finger. Cys4462 serves as the catalytic Nucleophile; for E3 ubiquitin-lipopolysaccharide ligase activity. 2 residues coordinate Zn(2+): Cys4471 and Cys4474.

The protein belongs to the AAA ATPase family. As to quaternary structure, monomer. Interacts with UBE2L3/UBCH7; UBE2L3/UBCH7 is the most efficient ubiquitin-conjugating enzyme E2 for the ubiquitin ligase activity. Interacts with UBE2N/UBC13; promoting 'Lys-63'-linked ubiquitination of target proteins.

The protein localises to the cytoplasm. It localises to the cytosol. Its subcellular location is the lipid droplet. It catalyses the reaction S-ubiquitinyl-[E2 ubiquitin-conjugating enzyme]-L-cysteine + [acceptor protein]-L-lysine = [E2 ubiquitin-conjugating enzyme]-L-cysteine + N(6)-ubiquitinyl-[acceptor protein]-L-lysine.. The enzyme catalyses ATP + H2O = ADP + phosphate + H(+). It participates in protein modification; protein ubiquitination. Its function is as follows. Atypical E3 ubiquitin ligase that can catalyze ubiquitination of both proteins and lipids, and which is involved in various processes, such as lipid metabolism, angiogenesis and cell-autonomous immunity. Acts as a key immune sensor by catalyzing ubiquitination of the lipid A moiety of bacterial lipopolysaccharide (LPS) via its RZ-type zinc-finger: restricts the proliferation of cytosolic bacteria, such as Salmonella, by generating the bacterial ubiquitin coat through the ubiquitination of LPS. Also acts indirectly by mediating the recruitment of the LUBAC complex, which conjugates linear polyubiquitin chains. Ubiquitination of LPS triggers cell-autonomous immunity, such as antibacterial autophagy, leading to degradation of the microbial invader. Involved in lipid metabolism by regulating fat storage and lipid droplet formation; act by inhibiting the lipolytic process. Also regulates lipotoxicity by inhibiting desaturation of fatty acids. Also acts as an E3 ubiquitin-protein ligase via its RING-type zinc finger: mediates 'Lys-63'-linked ubiquitination of target proteins. Involved in the non-canonical Wnt signaling pathway in vascular development: acts by mediating ubiquitination and degradation of FLNA and NFATC2 downstream of RSPO3, leading to inhibit the non-canonical Wnt signaling pathway and promoting vessel regression. Also has ATPase activity; ATPase activity is required for ubiquitination of LPS. In Mus musculus (Mouse), this protein is E3 ubiquitin-protein ligase RNF213.